A 392-amino-acid polypeptide reads, in one-letter code: Succinate--CoA ligase [ADP-forming] subunit beta (392 aa).

Residues 9 to 247 enclose the ATP-grasp domain; that stretch reads KEILRVCGVP…LYEEDPKEIE (239 aa). ATP-binding positions include Lys-49, 56–58, Glu-102, Gln-105, and Glu-110; that span reads GRG. Mg(2+) is bound by residues Asn-202 and Asp-216. Substrate-binding positions include Asn-267 and 324 to 326; that span reads GIM.

It belongs to the succinate/malate CoA ligase beta subunit family. As to quaternary structure, heterotetramer of two alpha and two beta subunits. It depends on Mg(2+) as a cofactor.

The enzyme catalyses succinate + ATP + CoA = succinyl-CoA + ADP + phosphate. It carries out the reaction GTP + succinate + CoA = succinyl-CoA + GDP + phosphate. Its pathway is carbohydrate metabolism; tricarboxylic acid cycle; succinate from succinyl-CoA (ligase route): step 1/1. Functionally, succinyl-CoA synthetase functions in the citric acid cycle (TCA), coupling the hydrolysis of succinyl-CoA to the synthesis of either ATP or GTP and thus represents the only step of substrate-level phosphorylation in the TCA. The beta subunit provides nucleotide specificity of the enzyme and binds the substrate succinate, while the binding sites for coenzyme A and phosphate are found in the alpha subunit. The sequence is that of Succinate--CoA ligase [ADP-forming] subunit beta from Neorickettsia sennetsu (strain ATCC VR-367 / Miyayama) (Ehrlichia sennetsu).